An 847-amino-acid polypeptide reads, in one-letter code: DNA mismatch repair protein MutS (847 aa).

602-609 contacts ATP; that stretch reads GPNMSGKS.

It belongs to the DNA mismatch repair MutS family.

In terms of biological role, this protein is involved in the repair of mismatches in DNA. It is possible that it carries out the mismatch recognition step. This protein has a weak ATPase activity. In Streptococcus uberis (strain ATCC BAA-854 / 0140J), this protein is DNA mismatch repair protein MutS.